The following is a 265-amino-acid chain: MYVGYVLDKDSPVYPGPARPASLGLGPQAYGPPAPPPAPPQYPDFSSYSHVEPAPAPPTAWGAPFPAPKDDWAAAYGPGPAAPAASPASLAFGPPPDFSPVPAPPGPGPGLLAQPLGGPGTPSSPGAQRPTPYEWMRRSVAAGGGGGSGKTRTKDKYRVVYTDHQRLELEKEFHYSRYITIRRKSELAANLGLTERQVKIWFQNRRAKERKVNKKKQQQQQPPQPPMAHDITATPAGPSLGGLCPSNTSLLATSSPMPVKEEFLP.

Residues 9 to 153 (KDSPVYPGPA…GGGGSGKTRT (145 aa)) are disordered. Positions 30-42 (YGPPAPPPAPPQY) are enriched in pro residues. The segment covering 73–92 (AAAYGPGPAAPAASPASLAF) has biased composition (low complexity). Positions 93–108 (GPPPDFSPVPAPPGPG) are enriched in pro residues. Positions 110 to 126 (GLLAQPLGGPGTPSSPG) are enriched in low complexity. A DNA-binding region (homeobox) is located at residues 154-213 (KDKYRVVYTDHQRLELEKEFHYSRYITIRRKSELAANLGLTERQVKIWFQNRRAKERKVN). Residues 157–178 (YRVVYTDHQRLELEKEFHYSRY) are interaction with DNA. The interaction with 5-mCpG DNA stretch occupies residues 196 to 207 (RQVKIWFQNRRA). Basic residues predominate over residues 207-217 (AKERKVNKKKQ). The tract at residues 207 to 265 (AKERKVNKKKQQQQQPPQPPMAHDITATPAGPSLGGLCPSNTSLLATSSPMPVKEEFLP) is disordered. Polar residues predominate over residues 245-256 (PSNTSLLATSSP).

This sequence belongs to the Caudal homeobox family. In terms of tissue distribution, intestinal epithelium.

It localises to the nucleus. Its function is as follows. Plays a role in transcriptional regulation. Involved in activated KRAS-mediated transcriptional activation of PRKD1 in colorectal cancer (CRC) cells. Binds to the PRKD1 promoter in colorectal cancer (CRC) cells. Could play a role in the terminal differentiation of the intestine. Binds preferentially to methylated DNA. The sequence is that of Homeobox protein CDX-1 (CDX1) from Homo sapiens (Human).